A 42-amino-acid chain; its full sequence is Crotamine-IV-3 (42 aa).

3 cysteine pairs are disulfide-bonded: C4–C37, C11–C31, and C19–C38.

This sequence belongs to the crotamine-myotoxin family. Monomer. In terms of tissue distribution, expressed by the venom gland.

It localises to the secreted. Its function is as follows. Cationic peptide that possesses multiple functions. It acts as a cell-penetrating peptide (CPP), and as a potent voltage-gated potassium channel (Kv) inhibitor. It exhibits antimicrobial activities, and hind limb paralysis. It also induces potent blockade of neuromuscular transmission in young chicken biventer cervicis preparation and potent myotoxic effect. In mice, it induces myonecrosis, upon intramuscular or subcutaneous injections. The polypeptide is Crotamine-IV-3 (Crotalus durissus cumanensis (South American rattlesnake)).